The sequence spans 459 residues: Exodeoxyribonuclease 7 large subunit (459 aa).

It belongs to the XseA family. As to quaternary structure, heterooligomer composed of large and small subunits.

It localises to the cytoplasm. The catalysed reaction is Exonucleolytic cleavage in either 5'- to 3'- or 3'- to 5'-direction to yield nucleoside 5'-phosphates.. Its function is as follows. Bidirectionally degrades single-stranded DNA into large acid-insoluble oligonucleotides, which are then degraded further into small acid-soluble oligonucleotides. The chain is Exodeoxyribonuclease 7 large subunit from Pseudomonas aeruginosa (strain ATCC 15692 / DSM 22644 / CIP 104116 / JCM 14847 / LMG 12228 / 1C / PRS 101 / PAO1).